The following is a 330-amino-acid chain: Low affinity immunoglobulin gamma Fc region receptor II (330 aa).

An N-terminal signal peptide occupies residues 1–29 (MESNWTVHVFSRTLCHMLLWTAVLNLAAG). Residues 30–210 (THDLPKAVVK…QGPKSSRSLP (181 aa)) lie on the Extracellular side of the membrane. 2 Ig-like C2-type domains span residues 50 to 106 (EDTV…QTRL) and 131 to 189 (GETI…LGRT). Intrachain disulfides connect C57–C99 and C138–C182. 4 N-linked (GlcNAc...) asparagine glycosylation sites follow: N65, N92, N166, and N173. A helical membrane pass occupies residues 211–231 (VLTIVAAVTGIAVAAIVIILV). The Cytoplasmic portion of the chain corresponds to 232–330 (SLVYLKKKQV…ETEHDYQNHI (99 aa)). Positions 261–330 (VGEYRQPSGG…ETEHDYQNHI (70 aa)) are disordered. A Phosphotyrosine modification is found at Y290. The short motif at 307–312 (ITYSLL) is the ITIM motif element. Y309 carries the phosphotyrosine; by SRC-type Tyr-kinases modification. Residue Y326 is modified to Phosphotyrosine.

As to quaternary structure, interacts with FGR. Interacts with LYN. Post-translationally, glycosylated. In terms of processing, when coaggregated to BCR, isoform IIB1 and isoform IIB1' become tyrosine phosphorylated and bind to the SH2 domains of the protein tyrosine phosphatase PTPC1. Phosphorylated by SRC-type Tyr-kinases such as LYN, BLK, FYN and SYK. As to expression, widely expressed by cells of hemopoietic origin. The isoforms are differentially expressed. Isoform IIB1 is preferentially expressed by cells of the lymphoid lineage, isoform IIB2 by cells of the myeloid lineage, and isoform IIB3 is released by macrophages and is present in the serum. Isoform IIB1' is expressed in myeloid and lymphoid cell lines, in normal spleen cells, and in resting or LPS-activated B-cells but is not detected in mesenteric lymph node cells.

Its subcellular location is the cell membrane. It localises to the cytoplasm. The protein localises to the cytoskeleton. The protein resides in the secreted. Its function is as follows. Receptor for the Fc region of complexed immunoglobulins gamma. Low affinity receptor. Involved in a variety of effector and regulatory functions such as phagocytosis of antigen-antibody complexes from the circulation and modulation of antibody production by B-cells. Isoform IIB1 and isoform IIB1' form caps but fail to mediate endocytosis or phagocytosis. Isoform IIB2 can mediate the endocytosis of soluble immune complexes via clathrin-coated pits. Isoform IIB1 and isoform IIB2 can down-regulate B-cell, T-cell, and mast cell activation when coaggregated to B-cell receptors for AG (BCR), T-cell receptors for AG (TCR), and Fc receptors, respectively. This chain is Low affinity immunoglobulin gamma Fc region receptor II (Fcgr2), found in Mus musculus (Mouse).